The sequence spans 109 residues: Large ribosomal subunit protein uL24 (109 aa).

This sequence belongs to the universal ribosomal protein uL24 family. In terms of assembly, part of the 50S ribosomal subunit.

Functionally, one of two assembly initiator proteins, it binds directly to the 5'-end of the 23S rRNA, where it nucleates assembly of the 50S subunit. Its function is as follows. One of the proteins that surrounds the polypeptide exit tunnel on the outside of the subunit. This chain is Large ribosomal subunit protein uL24, found in Syntrophobacter fumaroxidans (strain DSM 10017 / MPOB).